The sequence spans 570 residues: Interleukin-1 receptor accessory protein (570 aa).

A signal peptide spans 1–20 (MGLPWCLMSLFFCGILQSHA). Ig-like C2-type domains lie at 21 to 128 (SERC…VAFP), 141 to 230 (PMRL…RTMT), and 243 to 348 (PHIY…AKVK). Residues 21–367 (SERCDDWGLD…VELACGFGAT (347 aa)) lie on the Extracellular side of the membrane. 5 cysteine pairs are disulfide-bonded: Cys24/Cys122, Cys47/Cys114, Cys137/Cys181, Cys160/Cys212, and Cys266/Cys332. An N-linked (GlcNAc...) asparagine glycan is attached at Asn57. An essential for interaction with PTPRD region spans residues 69–85 (IWYWTRQDRDLEEPINF). N-linked (GlcNAc...) asparagine glycosylation is found at Asn107, Asn111, Asn118, Asn157, Asn196, and Asn209. The helical transmembrane segment at 368–388 (VFLVVVLIVVYHVYWLEMVLF) threads the bilayer. Topologically, residues 389–570 (YRAHFGTDET…GLSYSSLKNV (182 aa)) are cytoplasmic. Positions 403–546 (KEYDIYVSYA…RFWKQLQVAM (144 aa)) constitute a TIR domain. Glu482 is an active-site residue. The disordered stretch occupies residues 550 to 570 (KSPRWSSSDKQGLSYSSLKNV). Polar residues predominate over residues 553-570 (RWSSSDKQGLSYSSLKNV). Ser557 carries the post-translational modification Phosphoserine.

The protein belongs to the interleukin-1 receptor family. The interleukin-36 receptor complex is a heterodimer of IL1RL2 and IL1RAP; the association is inhibited by IL36RN. The interleukin-1 receptor complex is a heterodimer of IL1R1 and IL1RAP. Associates with IL1R2 to form a non-signaling interleukin-1 receptor complex. Interacts with IL-33-bound IL1RL1 to form the minimal interleukin-33 signaling complex with a 1:1:1 stoichiometry. Interacts with KIT (independently of stimulation with KITLG/SCF). A mast cell-specific KITLG/SCF-induced interleukin-33 signaling complex contains IL1RL1, IL1RAP, KIT and MYD88. Interacts (via the first immunoglobilin domain) with PTPRD (via the third immunoglobilin domain); induces pre- and postsynaptic differentiation of neurons. Highly expressed in hypothalamus, in the dentate gyrus of hippocampus, cerebral cortex, cerebellum, liver and lung.

Its subcellular location is the membrane. The catalysed reaction is NAD(+) + H2O = ADP-D-ribose + nicotinamide + H(+). In terms of biological role, coreceptor for IL1RL2 in the IL-36 signaling system. Coreceptor with IL1R1 in the IL-1 signaling system. Associates with IL1R1 bound to IL1B to form the high affinity interleukin-1 receptor complex which mediates interleukin-1-dependent activation of NF-kappa-B and other pathways. Signaling involves the recruitment of adapter molecules such as TOLLIP, MYD88, and IRAK1 or IRAK2 via the respective TIR domains of the receptor/coreceptor subunits. Recruits TOLLIP to the signaling complex. Does not bind to interleukin-1 alone; binding of IL1RN to IL1R1, prevents its association with IL1R1 to form a signaling complex. The cellular response is modulated through a non-signaling association with the membrane IL1R2 decoy receptor. Coreceptor for IL1RL1 in the IL-33 signaling system. Can bidirectionally induce pre- and postsynaptic differentiation of neurons by trans-synaptically binding to PTPRD. May play a role in IL1B-mediated costimulation of IFNG production from T-helper 1 (Th1) cells. The chain is Interleukin-1 receptor accessory protein (Il1rap) from Rattus norvegicus (Rat).